Here is a 795-residue protein sequence, read N- to C-terminus: Phenylalanine--tRNA ligase beta subunit (795 aa).

The tRNA-binding domain occupies 39–148 (AGTFNGVKVG…IDAPIGMDFR (110 aa)). Residues 401–476 (PKPNKVALRR…RIYGYDNIPN (76 aa)) form the B5 domain. 4 residues coordinate Mg(2+): Asp454, Asp460, Glu463, and Glu464. An FDX-ACB domain is found at 701–794 (SKFPANRRDI…VSEKFGASLR (94 aa)).

It belongs to the phenylalanyl-tRNA synthetase beta subunit family. Type 1 subfamily. Tetramer of two alpha and two beta subunits. The cofactor is Mg(2+).

The protein resides in the cytoplasm. The catalysed reaction is tRNA(Phe) + L-phenylalanine + ATP = L-phenylalanyl-tRNA(Phe) + AMP + diphosphate + H(+). In Vibrio vulnificus (strain CMCP6), this protein is Phenylalanine--tRNA ligase beta subunit.